Reading from the N-terminus, the 447-residue chain is Cysteine--tRNA ligase (447 aa).

C28 lines the Zn(2+) pocket. Positions 30–40 match the 'HIGH' region motif; the sequence is PTVYNYIHIGN. Zn(2+) is bound by residues C211, H236, and E240. The 'KMSKS' region signature appears at 268 to 272; it reads KMSKS. An ATP-binding site is contributed by K271.

Belongs to the class-I aminoacyl-tRNA synthetase family. Monomer. Zn(2+) is required as a cofactor.

Its subcellular location is the cytoplasm. The catalysed reaction is tRNA(Cys) + L-cysteine + ATP = L-cysteinyl-tRNA(Cys) + AMP + diphosphate. This is Cysteine--tRNA ligase from Streptococcus pyogenes serotype M18 (strain MGAS8232).